Here is a 692-residue protein sequence, read N- to C-terminus: Protein artemis (692 aa).

A Phosphothreonine modification is found at threonine 380. Phosphoserine is present on serine 385. 2 disordered regions span residues 503-555 and 640-660; these read RLEN…DSQS and STNA…PEAE. The span at 507-520 shows a compositional bias: polar residues; sequence FPSSTEAGGSQSPK. Positions 530–543 are enriched in low complexity; it reads THISSQNSSQSTHI. 2 stretches are compositionally biased toward polar residues: residues 544 to 555 and 640 to 650; these read TEQGSQGWDSQS and STNADSQSSSD. A Phosphoserine; by ATM modification is found at serine 645.

Belongs to the DNA repair metallo-beta-lactamase (DRMBL) family. As to quaternary structure, interacts with LIG4; the interaction is direct. Interacts with ATM. Interacts with BRCA1. Interacts with PRKDC. Interacts with TP53BP1. Also exhibits ATM- and phosphorylation-dependent interaction with the MRN complex, composed of MRE11, RAD50, and NBN. In terms of processing, phosphorylation on undefined residues by PRKDC may stimulate endonucleolytic activity on 5' and 3' hairpins and overhangs. PRKDC must remain present, even after phosphorylation, for efficient hairpin opening. Also phosphorylated by ATM in response to ionizing radiation (IR) and by ATR in response to ultraviolet (UV) radiation.

Its subcellular location is the nucleus. Required for V(D)J recombination, the process by which exons encoding the antigen-binding domains of immunoglobulins and T-cell receptor proteins are assembled from individual V, (D), and J gene segments. V(D)J recombination is initiated by the lymphoid specific RAG endonuclease complex, which generates site specific DNA double strand breaks (DSBs). These DSBs present two types of DNA end structures: hairpin sealed coding ends and phosphorylated blunt signal ends. These ends are independently repaired by the non homologous end joining (NHEJ) pathway to form coding and signal joints respectively. This protein exhibits single-strand specific 5'-3' exonuclease activity in isolation, and acquires endonucleolytic activity on 5' and 3' hairpins and overhangs when in a complex with PRKDC. The latter activity is required specifically for the resolution of closed hairpins prior to the formation of the coding joint. May also be required for the repair of complex DSBs induced by ionizing radiation, which require substantial end-processing prior to religation by NHEJ. This Pongo abelii (Sumatran orangutan) protein is Protein artemis (DCLRE1C).